A 333-amino-acid chain; its full sequence is Probable tRNA pseudouridine synthase B (333 aa).

A compositionally biased stretch (basic and acidic residues) spans 1–14 (MKCPSREVFSKFEE). Positions 1 to 27 (MKCPSREVFSKFEESTNPQWGKPPSQR) are disordered. D71 acts as the Nucleophile in catalysis. The region spanning 238–313 (LPKIWVRDSA…LVARTDRVVM (76 aa)) is the PUA domain.

This sequence belongs to the pseudouridine synthase TruB family. Type 2 subfamily.

It catalyses the reaction uridine(55) in tRNA = pseudouridine(55) in tRNA. Could be responsible for synthesis of pseudouridine from uracil-55 in the psi GC loop of transfer RNAs. The polypeptide is Probable tRNA pseudouridine synthase B (Pyrobaculum aerophilum (strain ATCC 51768 / DSM 7523 / JCM 9630 / CIP 104966 / NBRC 100827 / IM2)).